The primary structure comprises 416 residues: D-amino acid dehydrogenase 2 (416 aa).

Position 3-17 (3-17 (ITVLGAGVVGTAAAY)) interacts with FAD.

This sequence belongs to the DadA oxidoreductase family. FAD is required as a cofactor.

It catalyses the reaction a D-alpha-amino acid + A + H2O = a 2-oxocarboxylate + AH2 + NH4(+). Oxidative deamination of D-amino acids. The chain is D-amino acid dehydrogenase 2 (dadA2) from Mesorhizobium japonicum (strain LMG 29417 / CECT 9101 / MAFF 303099) (Mesorhizobium loti (strain MAFF 303099)).